We begin with the raw amino-acid sequence, 433 residues long: Putative zinc metalloprotease BB_0118 (433 aa).

His17 is a Zn(2+) binding site. Glu18 is a catalytic residue. His21 lines the Zn(2+) pocket. Residues 98–120 traverse the membrane as a helical segment; sequence ILIYFAGPLFNLIFSFIVFIFIS. The region spanning 193-265 is the PDZ domain; the sequence is TVSLQDFLKE…VVEIKFSRNG (73 aa). 3 helical membrane passes run 334–356, 366–388, and 401–423; these read VSGPVGIVGILSSSYSLGILYWI, LAGMNLFFIVIPIFDGGQIFISF, and TIYSFYSFGIFFGLFLFGLGLFN.

The protein belongs to the peptidase M50B family. The cofactor is Zn(2+).

The protein resides in the cell inner membrane. The protein is Putative zinc metalloprotease BB_0118 of Borreliella burgdorferi (strain ATCC 35210 / DSM 4680 / CIP 102532 / B31) (Borrelia burgdorferi).